We begin with the raw amino-acid sequence, 502 residues long: Keratin-associated protein 16-1 (502 aa).

Repeat copies occupy residues 4-8 (CCCSR), 58-62 (CCQPS), 73-77 (CCEAT), 93-97 (CCEAT), 108-112 (CCQPV), 113-117 (CCEAT), 133-137 (CCEAT), 152-156 (CCETS), 177-181 (CCQPV), 187-191 (CCSAV), 212-216 (CCQPV), 222-226 (CCPSV), 272-276 (CCVQG), 292-296 (CCVSS), and 347-351 (CCRPG). The 15 X 5 AA repeats of C-C-X(3) stretch occupies residues 73–307 (CCEATICEPS…CQPVCPEPSP (235 aa)). The interval 435–502 (RQPCTDSDND…QPAASKPADR (68 aa)) is disordered. Residues 489 to 502 (AAAPQPAASKPADR) show a composition bias toward low complexity.

This sequence belongs to the KRTAP type 16 family. As to quaternary structure, interacts with hair keratins.

In terms of biological role, in the hair cortex, hair keratin intermediate filaments are embedded in an interfilamentous matrix, consisting of hair keratin-associated proteins (KRTAP), which are essential for the formation of a rigid and resistant hair shaft through their extensive disulfide bond cross-linking with abundant cysteine residues of hair keratins. The matrix proteins include the high-sulfur and high-glycine-tyrosine keratins. The sequence is that of Keratin-associated protein 16-1 (Krtap16-1) from Mus musculus (Mouse).